The chain runs to 207 residues: Ciliary microtubule-associated protein 3 (207 aa).

Interacts with proteins involved in ciliary transport, including ARL13B, CETN1, KIF3A, RAB6A, RAB8A, TUBB1 and TUBG1. Interacts with AURKA. As to expression, expressed in tissues rich in ciliated cells, such as lung, kidney, vas deferens and testis. Both isoforms 1 and 2 are expressed in testis.

It localises to the golgi apparatus. The protein localises to the golgi stack. It is found in the trans-Golgi network. Its subcellular location is the nucleus. The protein resides in the cytoplasm. It localises to the cytoplasmic vesicle. In terms of biological role, during primary cilia disassembly, involved in cilia disassembly. Required specifically to control cilia retraction as well as the liberation and duplication of the basal body/centrosome. May act by stimulating AURKA activity at the basal body in a cell cycle-dependent manner. The chain is Ciliary microtubule-associated protein 3 (Cimap3) from Mus musculus (Mouse).